Reading from the N-terminus, the 415-residue chain is Serine hydroxymethyltransferase 2 (415 aa).

Residues Leu-122 and Gly-126–Leu-128 contribute to the (6S)-5,6,7,8-tetrahydrofolate site. At Lys-230 the chain carries N6-(pyridoxal phosphate)lysine.

This sequence belongs to the SHMT family. Homodimer. Pyridoxal 5'-phosphate is required as a cofactor.

It is found in the cytoplasm. It carries out the reaction (6R)-5,10-methylene-5,6,7,8-tetrahydrofolate + glycine + H2O = (6S)-5,6,7,8-tetrahydrofolate + L-serine. It participates in one-carbon metabolism; tetrahydrofolate interconversion. Its pathway is amino-acid biosynthesis; glycine biosynthesis; glycine from L-serine: step 1/1. Functionally, catalyzes the reversible interconversion of serine and glycine with tetrahydrofolate (THF) serving as the one-carbon carrier. This reaction serves as the major source of one-carbon groups required for the biosynthesis of purines, thymidylate, methionine, and other important biomolecules. Also exhibits THF-independent aldolase activity toward beta-hydroxyamino acids, producing glycine and aldehydes, via a retro-aldol mechanism. This is Serine hydroxymethyltransferase 2 from Burkholderia lata (strain ATCC 17760 / DSM 23089 / LMG 22485 / NCIMB 9086 / R18194 / 383).